We begin with the raw amino-acid sequence, 402 residues long: MAATRRPGRNHLFVPGPTNIPDRVMRAMMVQSEDHRSVDFPSLTKPLFEDTKKVFGSTEGTIFLFPASGTGIWESALSNTLARGDKVLAARFGQFSHLWIDMAQRLGLDVVVQEEEWGTGAKPEKIEEALRADKNHEIKAVMVVHNETATGVTSNIGAVRKAIDAAGHPALLFVDGVSSIGSLPFKADEWKVDCAIAGSQKGLMLPAGLGVICVSQKALKAAEGQSGRNDRLARVYFDWEDQKKQNPTGYFPYTPPLPLLYGLREALACLFEEGLENVYHRHAVLGEATRQAVAAWGLKTCAKSPEWNSDTVTAILAPEGVDAAKIIKHAYVRYNLALGAGLSQVAGKVFRIGHVGDLNELSLLGAIAGAEMSLIDNGVKVTPGSGVAAASSYLRENPLAKA.

Lys-201 is subject to N6-(pyridoxal phosphate)lysine.

The protein belongs to the class-V pyridoxal-phosphate-dependent aminotransferase family. It depends on pyridoxal 5'-phosphate as a cofactor.

The catalysed reaction is glyoxylate + L-serine = 3-hydroxypyruvate + glycine. It functions in the pathway one-carbon metabolism; formaldehyde assimilation via serine pathway. This is Serine--glyoxylate aminotransferase from Methylorubrum extorquens (strain ATCC 14718 / DSM 1338 / JCM 2805 / NCIMB 9133 / AM1) (Methylobacterium extorquens).